The sequence spans 182 residues: ATP synthase subunit delta (182 aa).

It belongs to the ATPase delta chain family. F-type ATPases have 2 components, F(1) - the catalytic core - and F(0) - the membrane proton channel. F(1) has five subunits: alpha(3), beta(3), gamma(1), delta(1), epsilon(1). F(0) has three main subunits: a(1), b(2) and c(10-14). The alpha and beta chains form an alternating ring which encloses part of the gamma chain. F(1) is attached to F(0) by a central stalk formed by the gamma and epsilon chains, while a peripheral stalk is formed by the delta and b chains.

Its subcellular location is the cell membrane. F(1)F(0) ATP synthase produces ATP from ADP in the presence of a proton or sodium gradient. F-type ATPases consist of two structural domains, F(1) containing the extramembraneous catalytic core and F(0) containing the membrane proton channel, linked together by a central stalk and a peripheral stalk. During catalysis, ATP synthesis in the catalytic domain of F(1) is coupled via a rotary mechanism of the central stalk subunits to proton translocation. Functionally, this protein is part of the stalk that links CF(0) to CF(1). It either transmits conformational changes from CF(0) to CF(1) or is implicated in proton conduction. This Lactobacillus gasseri (strain ATCC 33323 / DSM 20243 / BCRC 14619 / CIP 102991 / JCM 1131 / KCTC 3163 / NCIMB 11718 / NCTC 13722 / AM63) protein is ATP synthase subunit delta.